A 66-amino-acid chain; its full sequence is Large ribosomal subunit protein bL33c (66 aa).

It belongs to the bacterial ribosomal protein bL33 family.

The protein localises to the plastid. Its subcellular location is the chloroplast. This chain is Large ribosomal subunit protein bL33c, found in Ceratophyllum demersum (Rigid hornwort).